A 263-amino-acid chain; its full sequence is Rano class II histocompatibility antigen, B-1 beta chain (263 aa).

The signal sequence occupies residues 1 to 27; sequence MALQTPSFLLPAAVVVLMVLSSPGTEG. Residues 28 to 120 form a beta-1 region; that stretch reads RDSPRDFVYQ…SEVRTSLRRL (93 aa). Residues 28 to 224 lie on the Extracellular side of the membrane; sequence RDSPRDFVYQ…RAQSESAQSK (197 aa). Cystine bridges form between Cys-42–Cys-104 and Cys-143–Cys-199. An N-linked (GlcNAc...) asparagine glycan is attached at Asn-46. The tract at residues 121–214 is beta-2; that stretch reads EQPNVAISLS…SLESPVTVEW (94 aa). The 89-residue stretch at 123–211 folds into the Ig-like C1-type domain; that stretch reads PNVAISLSRT…DHPSLESPVT (89 aa). The segment at 215–224 is connecting peptide; that stretch reads RAQSESAQSK. The chain crosses the membrane as a helical span at residues 225–245; sequence MLSGIGGFVLGVIFLGLGLFI. Topologically, residues 246 to 263 are cytoplasmic; the sequence is RHKRQKGPRGPPPAGLLQ. Residue Lys-251 forms a Glycyl lysine isopeptide (Lys-Gly) (interchain with G-Cter in ubiquitin) linkage.

The protein belongs to the MHC class II family.

It is found in the membrane. Functionally, involved in the presentation of foreign antigens to the immune system. The polypeptide is Rano class II histocompatibility antigen, B-1 beta chain (RT1-Bb) (Rattus norvegicus (Rat)).